We begin with the raw amino-acid sequence, 218 residues long: Urease accessory protein UreG (218 aa).

Residue 22 to 29 participates in GTP binding; that stretch reads GPVGSGKT.

Belongs to the SIMIBI class G3E GTPase family. UreG subfamily. As to quaternary structure, homodimer. UreD, UreF and UreG form a complex that acts as a GTP-hydrolysis-dependent molecular chaperone, activating the urease apoprotein by helping to assemble the nickel containing metallocenter of UreC. The UreE protein probably delivers the nickel.

The protein localises to the cytoplasm. Facilitates the functional incorporation of the urease nickel metallocenter. This process requires GTP hydrolysis, probably effectuated by UreG. The chain is Urease accessory protein UreG from Polaromonas sp. (strain JS666 / ATCC BAA-500).